Reading from the N-terminus, the 933-residue chain is Anoctamin-7 (933 aa).

The Cytoplasmic segment spans residues 1–355 (MRMAATAWAG…YFAWLGFYTG (355 aa)). Residues 43–101 (ETSSGSHCARSRMLRRRAQEEDSTVLIDVSPPEAEKRGSYGSTAHASEPGGQQAAACRA) form a disordered region. The helical transmembrane segment at 356–376 (WLLPAAVVGTLVFLVGCFLVF) threads the bilayer. Residues 377–420 (SDIPTQELCGSKDSFEMCPLCLDCPFWLLSSACALAQAGRLFDH) are Extracellular-facing. The helical transmembrane segment at 421-441 (GGTVFFSLFMALWAVLLLEYW) threads the bilayer. The Cytoplasmic segment spans residues 442-499 (KRKSATLAYRWDCSDYEDTEERPRPQFAASAPMTAPNPITGEDEPYFPERSRARRMLA). A helical membrane pass occupies residues 500-520 (GSVVIVVMVAVVVMCLVSIIL). Residues 521–550 (YRAIMAIVVSRSGNTLLAAWASRIASLTGS) lie on the Extracellular side of the membrane. The chain crosses the membrane as a helical span at residues 551 to 571 (VVNLVFILILSKIYVSLAHVL). Topologically, residues 572–588 (TRWEMHRTQTKFEDAFT) are cytoplasmic. A helical membrane pass occupies residues 589–609 (LKVFIFQFVNFYSSPVYIAFF). The Extracellular portion of the chain corresponds to 610–714 (KGRFVGYPGN…FDEYLEMVLQ (105 aa)). Residues 715–735 (FGFVTIFVAACPLAPLFALLN) form a helical membrane-spanning segment. At 736–763 (NWVEIRLDARKFVCEYRRPVAERAQDIG) the chain is on the cytoplasmic side. The chain crosses the membrane as a helical span at residues 764-784 (IWFHILAGLTHLAVISNAFLL). Residues 785 to 843 (AFSSDFLPRAYYRWTRAHDLRGFLNFTLARAPSSFAAAHNRTCRYRAFRDDDGHYSQTY) are Extracellular-facing. N-linked (GlcNAc...) asparagine glycosylation is found at N809 and N824. A helical membrane pass occupies residues 844–864 (WNLLAIRLAFVIVFEHVVFSV). Over 865-933 (GRLLDLLVPD…TVPKASQLQQ (69 aa)) the chain is Cytoplasmic. A disordered region spans residues 902–933 (GTNGTKDEQPEGSELSSHWTPFTVPKASQLQQ). Residues 915–933 (ELSSHWTPFTVPKASQLQQ) show a composition bias toward polar residues.

This sequence belongs to the anoctamin family. As to expression, specifically expressed in epithelial cells of the prostate (at protein level).

Its subcellular location is the cell membrane. The protein resides in the cell junction. The protein localises to the endoplasmic reticulum. It localises to the cytoplasm. It is found in the cytosol. The enzyme catalyses a 1,2-diacyl-sn-glycero-3-phospho-L-serine(in) = a 1,2-diacyl-sn-glycero-3-phospho-L-serine(out). It catalyses the reaction a beta-D-galactosyl-(1&lt;-&gt;1')-N-acylsphing-4-enine(out) = a beta-D-galactosyl-(1&lt;-&gt;1')-N-acylsphing-4-enine(in). The catalysed reaction is a 1,2-diacyl-sn-glycero-3-phosphocholine(in) = a 1,2-diacyl-sn-glycero-3-phosphocholine(out). Functionally, has calcium-dependent phospholipid scramblase activity; scrambles phosphatidylserine, phosphatidylcholine and galactosylceramide. Does not exhibit calcium-activated chloride channel (CaCC) activity. May play a role in cell-cell interactions. This is Anoctamin-7 (ANO7) from Homo sapiens (Human).